The sequence spans 103 residues: NAD(P)H-quinone oxidoreductase subunit 4L (103 aa).

Transmembrane regions (helical) follow at residues 5–25 (LQYC…GLIT), 32–52 (VLMS…GFSN), and 66–86 (IFVI…VLAI).

The protein belongs to the complex I subunit 4L family. In terms of assembly, NDH-1 can be composed of about 15 different subunits; different subcomplexes with different compositions have been identified which probably have different functions.

The protein localises to the cellular thylakoid membrane. The catalysed reaction is a plastoquinone + NADH + (n+1) H(+)(in) = a plastoquinol + NAD(+) + n H(+)(out). The enzyme catalyses a plastoquinone + NADPH + (n+1) H(+)(in) = a plastoquinol + NADP(+) + n H(+)(out). NDH-1 shuttles electrons from an unknown electron donor, via FMN and iron-sulfur (Fe-S) centers, to quinones in the respiratory and/or the photosynthetic chain. The immediate electron acceptor for the enzyme in this species is believed to be plastoquinone. Couples the redox reaction to proton translocation, and thus conserves the redox energy in a proton gradient. Cyanobacterial NDH-1 also plays a role in inorganic carbon-concentration. The sequence is that of NAD(P)H-quinone oxidoreductase subunit 4L from Synechocystis sp. (strain ATCC 27184 / PCC 6803 / Kazusa).